A 206-amino-acid chain; its full sequence is Small ribosomal subunit protein eS1 (206 aa).

This sequence belongs to the eukaryotic ribosomal protein eS1 family.

The protein is Small ribosomal subunit protein eS1 of Natronomonas pharaonis (strain ATCC 35678 / DSM 2160 / CIP 103997 / JCM 8858 / NBRC 14720 / NCIMB 2260 / Gabara) (Halobacterium pharaonis).